The primary structure comprises 580 residues: 3-(3-hydroxy-phenyl)propionate/3-hydroxycinnamic acid hydroxylase (580 aa).

FAD is bound by residues Asp-14–Glu-43 and Phe-291–Asp-301.

The protein belongs to the PheA/TfdB FAD monooxygenase family. It depends on FAD as a cofactor.

It catalyses the reaction 3-(3-hydroxyphenyl)propanoate + NADH + O2 + H(+) = 3-(2,3-dihydroxyphenyl)propanoate + NAD(+) + H2O. It carries out the reaction (2E)-3-(3-hydroxyphenyl)prop-2-enoate + NADH + O2 + H(+) = (2E)-3-(2,3-dihydroxyphenyl)prop-2-enoate + NAD(+) + H2O. Its pathway is aromatic compound metabolism; 3-phenylpropanoate degradation. Its function is as follows. Catalyzes the insertion of one atom of molecular oxygen into position 2 of the phenyl ring of 3-(3-hydroxyphenyl)propionate (3-HPP) and hydroxycinnamic acid (3HCI). The chain is 3-(3-hydroxy-phenyl)propionate/3-hydroxycinnamic acid hydroxylase from Mycobacterium avium (strain 104).